Consider the following 711-residue polypeptide: Cyclomaltodextrin glucanotransferase (711 aa).

An N-terminal signal peptide occupies residues 1 to 31 (MRRWLSLVLSMSFVFSAIFIVSDTQKVTVEA). Residues 32–165 (AGNLNKVNFT…GIKVIIDFAP (134 aa)) are A1. Ca(2+) is bound by residues Asp55, Asn57, Asn60, and Asn61. A disulfide bridge links Cys71 with Cys78. The Ca(2+) site is built by Gly79 and Asp81. Substrate is bound at residue 127–128 (YW). Asn166 lines the Ca(2+) pocket. A b region spans residues 166–229 (NHTSPASETN…NLFDLADLNH (64 aa)). His167 lines the substrate pocket. Ile217 is a Ca(2+) binding site. 220–223 (NLFD) provides a ligand contact to substrate. Asp226 serves as a coordination point for Ca(2+). The tract at residues 230–433 (QNPVIDRYLK…LRRNNPALAY (204 aa)) is A2. Arg254 lines the substrate pocket. Residue Asp256 is the Nucleophile of the active site. 259 to 260 (KH) serves as a coordination point for substrate. His260 is a Ca(2+) binding site. The active-site Proton donor is the Glu284. Substrate contacts are provided by His354, Asp398, and Arg402. The tract at residues 434-522 (GDTEQRWING…EVGVWAYSAT (89 aa)) is c. Residues 523–606 (ESTPIIGHVG…SAAYDNFEVL (84 aa)) form a d region. One can recognise an IPT/TIG domain in the interval 526 to 604 (PIIGHVGPMM…QTSAAYDNFE (79 aa)). Residues 605-711 (VLTNDQVSVR…TGKIIVDWQN (107 aa)) enclose the CBM20 domain. The segment at 607–711 (TNDQVSVRFV…TGKIIVDWQN (105 aa)) is e.

The protein belongs to the glycosyl hydrolase 13 family. In terms of assembly, monomer. Requires Ca(2+) as cofactor.

It localises to the secreted. It catalyses the reaction Cyclizes part of a (1-&gt;4)-alpha-D-glucan chain by formation of a (1-&gt;4)-alpha-D-glucosidic bond.. The chain is Cyclomaltodextrin glucanotransferase (cgt) from Geobacillus stearothermophilus (Bacillus stearothermophilus).